We begin with the raw amino-acid sequence, 508 residues long: Lysine--tRNA ligase (508 aa).

Mg(2+) contacts are provided by glutamate 418 and glutamate 425.

It belongs to the class-II aminoacyl-tRNA synthetase family. Homodimer. It depends on Mg(2+) as a cofactor.

The protein localises to the cytoplasm. The enzyme catalyses tRNA(Lys) + L-lysine + ATP = L-lysyl-tRNA(Lys) + AMP + diphosphate. The chain is Lysine--tRNA ligase from Burkholderia thailandensis (strain ATCC 700388 / DSM 13276 / CCUG 48851 / CIP 106301 / E264).